Reading from the N-terminus, the 475-residue chain is Putative aldehyde dehydrogenase SERP1729 (475 aa).

201 to 207 (GDGSGVG) is an NAD(+) binding site. Residues E245 and C279 contribute to the active site.

It belongs to the aldehyde dehydrogenase family.

The catalysed reaction is an aldehyde + NAD(+) + H2O = a carboxylate + NADH + 2 H(+). The polypeptide is Putative aldehyde dehydrogenase SERP1729 (Staphylococcus epidermidis (strain ATCC 35984 / DSM 28319 / BCRC 17069 / CCUG 31568 / BM 3577 / RP62A)).